Consider the following 291-residue polypeptide: Nucleotide-binding protein RALTA_A0325 (291 aa).

8–15 (GISGSGKS) contacts ATP. 57–60 (DIRS) serves as a coordination point for GTP.

The protein belongs to the RapZ-like family.

Functionally, displays ATPase and GTPase activities. This Cupriavidus taiwanensis (strain DSM 17343 / BCRC 17206 / CCUG 44338 / CIP 107171 / LMG 19424 / R1) (Ralstonia taiwanensis (strain LMG 19424)) protein is Nucleotide-binding protein RALTA_A0325.